A 158-amino-acid chain; its full sequence is Transcription elongation factor GreA (158 aa).

Residues 1 to 26 are a coiled coil; the sequence is MNKVPLTEKGAQQLREELQELKTVVR.

It belongs to the GreA/GreB family.

Its function is as follows. Necessary for efficient RNA polymerase transcription elongation past template-encoded arresting sites. The arresting sites in DNA have the property of trapping a certain fraction of elongating RNA polymerases that pass through, resulting in locked ternary complexes. Cleavage of the nascent transcript by cleavage factors such as GreA or GreB allows the resumption of elongation from the new 3'terminus. GreA releases sequences of 2 to 3 nucleotides. This is Transcription elongation factor GreA from Nitrosococcus oceani (strain ATCC 19707 / BCRC 17464 / JCM 30415 / NCIMB 11848 / C-107).